The following is a 621-amino-acid chain: DDB1- and CUL4-associated factor 10 homolog (621 aa).

4 WD repeats span residues 46–85 (GRTG…EIFK), 89–127 (AHTD…QKLR), 131–170 (GHSN…EQGL), and 176–215 (FHAS…TLHK). Disordered stretches follow at residues 305-349 (VRSE…PRQA) and 437-483 (LMGS…TTVR). S307 is modified (phosphoserine). The span at 324–342 (STTLASRSSLNESQDQDTV) shows a compositional bias: polar residues. The span at 454 to 478 (ESNQSSSSSSSSSSSSSSSSSSNNS) shows a compositional bias: low complexity. S494 and S497 each carry phosphoserine. Residues 588 to 621 (EHQDVVLCAKFSPREPLLVTGCNGGEVTWYRPNL) form a WD 5 repeat.

This sequence belongs to the WD repeat DCAF10 family.

The protein is DDB1- and CUL4-associated factor 10 homolog of Drosophila melanogaster (Fruit fly).